The sequence spans 1035 residues: Protein hir-1 (1035 aa).

7 WD repeats span residues Gln-15–Asp-54, His-68–Thr-107, Gly-129–Thr-168, Val-171–Thr-210, Pro-232–Asn-275, Asp-299–Ile-338, and Ile-342–Lys-383. Residues Lys-393 to Ala-479 are disordered. Positions Asp-408–Glu-425 are enriched in basic and acidic residues.

This sequence belongs to the WD repeat HIR1 family.

The protein resides in the nucleus. Its function is as follows. Required for replication-independent chromatin assembly and for the periodic repression of histone gene transcription during the cell cycle. This Neurospora crassa (strain ATCC 24698 / 74-OR23-1A / CBS 708.71 / DSM 1257 / FGSC 987) protein is Protein hir-1 (hir-1).